Reading from the N-terminus, the 89-residue chain is NADH-ubiquinone oxidoreductase chain 4L (89 aa).

3 consecutive transmembrane segments (helical) span residues 1 to 21 (MNFS…NRKN), 22 to 42 (IILM…LILI), and 55 to 75 (FAIY…GILV).

This sequence belongs to the complex I subunit 4L family.

Its subcellular location is the mitochondrion membrane. The catalysed reaction is a ubiquinone + NADH + 5 H(+)(in) = a ubiquinol + NAD(+) + 4 H(+)(out). Its function is as follows. Core subunit of the mitochondrial membrane respiratory chain NADH dehydrogenase (Complex I) that is believed to belong to the minimal assembly required for catalysis. Complex I functions in the transfer of electrons from NADH to the respiratory chain. The immediate electron acceptor for the enzyme is believed to be ubiquinone. In Talaromyces marneffei (Penicillium marneffei), this protein is NADH-ubiquinone oxidoreductase chain 4L (nd4L).